Reading from the N-terminus, the 156-residue chain is Protein-export protein SecB (156 aa).

This sequence belongs to the SecB family. As to quaternary structure, homotetramer, a dimer of dimers. One homotetramer interacts with 1 SecA dimer.

The protein localises to the cytoplasm. Functionally, one of the proteins required for the normal export of preproteins out of the cell cytoplasm. It is a molecular chaperone that binds to a subset of precursor proteins, maintaining them in a translocation-competent state. It also specifically binds to its receptor SecA. The protein is Protein-export protein SecB of Yersinia enterocolitica serotype O:8 / biotype 1B (strain NCTC 13174 / 8081).